Here is a 122-residue protein sequence, read N- to C-terminus: Large ribosomal subunit protein uL14c (122 aa).

This sequence belongs to the universal ribosomal protein uL14 family. As to quaternary structure, part of the 50S ribosomal subunit.

Its subcellular location is the plastid. The protein localises to the chloroplast. Its function is as follows. Binds to 23S rRNA. This Marchantia polymorpha (Common liverwort) protein is Large ribosomal subunit protein uL14c.